Here is a 206-residue protein sequence, read N- to C-terminus: Thymidylate kinase (206 aa).

11-18 (GIDGAGKT) contacts ATP.

The protein belongs to the thymidylate kinase family.

The enzyme catalyses dTMP + ATP = dTDP + ADP. In terms of biological role, phosphorylation of dTMP to form dTDP in both de novo and salvage pathways of dTTP synthesis. This chain is Thymidylate kinase, found in Burkholderia cenocepacia (strain HI2424).